The chain runs to 276 residues: Protein HemX (276 aa).

The next 8 helical transmembrane spans lie at 9–29 (LNEG…IDFL), 40–60 (FWLL…FMWV), 66–86 (VLNV…LSLV), 93–113 (VDFI…IHTF), 132–152 (LVIH…SFVF), 187–207 (VLNV…VIWA), 217–237 (FDAK…YLYI), and 247–267 (VAAL…FLLG).

The protein to M.leprae U1620K.

The protein resides in the cell membrane. Functionally, required for HemL synthesis. This is Protein HemX (hemX) from Bacillus subtilis (strain 168).